The primary structure comprises 185 residues: Ribosome-recycling factor (185 aa).

Belongs to the RRF family.

The protein localises to the cytoplasm. Functionally, responsible for the release of ribosomes from messenger RNA at the termination of protein biosynthesis. May increase the efficiency of translation by recycling ribosomes from one round of translation to another. In Thermus thermophilus (strain ATCC BAA-163 / DSM 7039 / HB27), this protein is Ribosome-recycling factor.